A 562-amino-acid polypeptide reads, in one-letter code: NAD-dependent histone deacetylase SIR2 (562 aa).

The interval 1–67 (MTIPHMKYAV…RETNTTDPLG (67 aa)) is disordered. Residues 11-25 (SKTSENKVSNTVSPT) show a composition bias toward polar residues. Residues 26–36 (QDKDAIRKQPD) are compositionally biased toward basic and acidic residues. One can recognise a Deacetylase sirtuin-type domain in the interval 237 to 527 (RLSNFFTIDH…AMVAQKCGWT (291 aa)). NAD(+)-binding positions include 262–281 (GAGV…EGFY) and 344–347 (QNID). The active-site Proton acceptor is His-364. Positions 372, 375, 396, and 399 each coordinate Zn(2+). Residues 471-473 (GTS), 496-498 (NRD), and Cys-513 contribute to the NAD(+) site.

It belongs to the sirtuin family. Class I subfamily. As to quaternary structure, homomultimer. Forms a complex with SIR3 and SIR4. Component of the RENT complex, at least composed of SIR2, CDC14 and NET1. The RENT complex interacts with FOB1. Interacts with ESC8. Interacts with and ZDS2. Interacts with MCM10. Interacts with SLX5. Interacts with NSI1. Zn(2+) is required as a cofactor.

Its subcellular location is the nucleus. It is found in the nucleolus. The catalysed reaction is N(6)-acetyl-L-lysyl-[protein] + NAD(+) + H2O = 2''-O-acetyl-ADP-D-ribose + nicotinamide + L-lysyl-[protein]. With respect to regulation, its activity is increased by calorie restriction, which slows the pace of aging and increases maximum lifespan. Activated by resveratrol (3,5,4'-trihydroxy-trans-stilbene), which is found in red wine. NAD-dependent deacetylase, which participates in a wide range of cellular events including chromosome silencing, chromosome segregation, DNA recombination and the determination of life span. Involved in transcriptional repression of the silent mating-type loci HML and HMR and telomeric silencing via its association with SIR3 and SIR4. Plays a central role in ribosomal DNA (rDNA) silencing via its association with the RENT complex, preventing hyperrecombination, and repressing transcription from foreign promoters, which contributes to extending life span. Probably represses transcription via the formation of heterochromatin structure, which involves the compaction of chromatin fiber into a more condensed form, although this complex in at least one case can still bind euchromatic levels of positive transcription regulators. Although it displays some NAD-dependent histone deacetylase activity on histone H3K9Ac and H3K14Ac and histone H4K16Ac in vitro, such activity is unclear in vivo and may not be essential. This is NAD-dependent histone deacetylase SIR2 (SIR2) from Saccharomyces cerevisiae (strain ATCC 204508 / S288c) (Baker's yeast).